Reading from the N-terminus, the 333-residue chain is B3 domain-containing transcription factor NGA4 (333 aa).

Positions 36 to 145 (FDKVLTPSDV…KIMFIDWRPR (110 aa)) form a DNA-binding region, TF-B3. The disordered stretch occupies residues 268–333 (VEESSSSGDT…YKRKGKSLEL (66 aa)). Residues 323 to 333 (EYKRKGKSLEL) are compositionally biased toward basic and acidic residues.

The protein resides in the nucleus. Functionally, regulates lateral organ growth. Functionally redundant with NGA1, NGA2 and NGA3. This Arabidopsis thaliana (Mouse-ear cress) protein is B3 domain-containing transcription factor NGA4 (NGA4).